We begin with the raw amino-acid sequence, 82 residues long: MVTIRLARHGAKKRPFYQIVVADSRNSATGRFIEKVGFFNPTATGQEEGLRLDLDRVNHWVSQGASLSDRVAQLVKTAQKAA.

It belongs to the bacterial ribosomal protein bS16 family.

This Vibrio cholerae serotype O1 (strain ATCC 39541 / Classical Ogawa 395 / O395) protein is Small ribosomal subunit protein bS16.